Reading from the N-terminus, the 273-residue chain is MAVVKCKPTSPGRRHVVKVVNPELHKGKPFAPLVEKNSKSGGRNNNGRITTRHIGGGHKQAYRIVDFKRNKDGIPATVERLEYDPNRSANIALVLYKDGERRYILAPKGLKAGDQIQSGVDAAIKAGNTLPMRNIPVGSTVHNVEMKPGKGGQLARSAGTYVQIVARDGAYVTLRLRSGEMRKVEADCRATLGEVGNAEHMLRVLGKAGAARWRGIRPTVRGTAMNPVDHPHGGGEGRNFGKHPVTPWGVQTKGKKTRSNKRTDKFIVRRRSK.

Disordered stretches follow at residues 28–53 and 221–273; these read KPFA…TTRH and RGTA…RRSK. Positions 39–48 are enriched in low complexity; it reads KSGGRNNNGR.

It belongs to the universal ribosomal protein uL2 family. In terms of assembly, part of the 50S ribosomal subunit. Forms a bridge to the 30S subunit in the 70S ribosome.

One of the primary rRNA binding proteins. Required for association of the 30S and 50S subunits to form the 70S ribosome, for tRNA binding and peptide bond formation. It has been suggested to have peptidyltransferase activity; this is somewhat controversial. Makes several contacts with the 16S rRNA in the 70S ribosome. The chain is Large ribosomal subunit protein uL2 from Enterobacter sp. (strain 638).